Here is a 122-residue protein sequence, read N- to C-terminus: Large ribosomal subunit protein uL14c (122 aa).

It belongs to the universal ribosomal protein uL14 family. Part of the 50S ribosomal subunit.

It is found in the plastid. The protein resides in the chloroplast. Its function is as follows. Binds to 23S rRNA. In Cucumis sativus (Cucumber), this protein is Large ribosomal subunit protein uL14c.